The primary structure comprises 251 residues: Triosephosphate isomerase (251 aa).

N9–K11 is a substrate binding site. Residue H95 is the Electrophile of the active site. E167 functions as the Proton acceptor in the catalytic mechanism. Residues G173, S212, and G233–G234 each bind substrate.

It belongs to the triosephosphate isomerase family. Homodimer.

It localises to the cytoplasm. It catalyses the reaction D-glyceraldehyde 3-phosphate = dihydroxyacetone phosphate. Its pathway is carbohydrate biosynthesis; gluconeogenesis. It functions in the pathway carbohydrate degradation; glycolysis; D-glyceraldehyde 3-phosphate from glycerone phosphate: step 1/1. Its function is as follows. Involved in the gluconeogenesis. Catalyzes stereospecifically the conversion of dihydroxyacetone phosphate (DHAP) to D-glyceraldehyde-3-phosphate (G3P). The protein is Triosephosphate isomerase of Pseudomonas savastanoi pv. phaseolicola (strain 1448A / Race 6) (Pseudomonas syringae pv. phaseolicola (strain 1448A / Race 6)).